We begin with the raw amino-acid sequence, 314 residues long: Ribosomal RNA small subunit methyltransferase H (314 aa).

S-adenosyl-L-methionine-binding positions include 35 to 37 (GGH), Asp54, Phe83, Asp104, and Gln111.

Belongs to the methyltransferase superfamily. RsmH family.

The protein localises to the cytoplasm. It carries out the reaction cytidine(1402) in 16S rRNA + S-adenosyl-L-methionine = N(4)-methylcytidine(1402) in 16S rRNA + S-adenosyl-L-homocysteine + H(+). In terms of biological role, specifically methylates the N4 position of cytidine in position 1402 (C1402) of 16S rRNA. This is Ribosomal RNA small subunit methyltransferase H from Oenococcus oeni (strain ATCC BAA-331 / PSU-1).